Reading from the N-terminus, the 360-residue chain is Histidinol-phosphate aminotransferase (360 aa).

The residue at position 222 (K222) is an N6-(pyridoxal phosphate)lysine.

It belongs to the class-II pyridoxal-phosphate-dependent aminotransferase family. Histidinol-phosphate aminotransferase subfamily. As to quaternary structure, homodimer. Requires pyridoxal 5'-phosphate as cofactor.

The enzyme catalyses L-histidinol phosphate + 2-oxoglutarate = 3-(imidazol-4-yl)-2-oxopropyl phosphate + L-glutamate. It participates in amino-acid biosynthesis; L-histidine biosynthesis; L-histidine from 5-phospho-alpha-D-ribose 1-diphosphate: step 7/9. This Listeria welshimeri serovar 6b (strain ATCC 35897 / DSM 20650 / CCUG 15529 / CIP 8149 / NCTC 11857 / SLCC 5334 / V8) protein is Histidinol-phosphate aminotransferase.